The chain runs to 399 residues: Elongation factor Tu 2 (399 aa).

The region spanning 10–209 (KPHVNIGTIG…QVDGYIPEPE (200 aa)) is the tr-type G domain. A G1 region spans residues 19 to 26 (GHVDHGKT). 19 to 26 (GHVDHGKT) contacts GTP. Thr-26 is a binding site for Mg(2+). Residues 60–64 (GITIA) are G2. The segment at 81–84 (DCPG) is G3. Residues 81–85 (DCPGH) and 136–139 (NKAD) each bind GTP. Residues 136–139 (NKAD) are G4. The interval 174 to 176 (SAL) is G5.

This sequence belongs to the TRAFAC class translation factor GTPase superfamily. Classic translation factor GTPase family. EF-Tu/EF-1A subfamily. As to quaternary structure, monomer.

Its subcellular location is the cytoplasm. It catalyses the reaction GTP + H2O = GDP + phosphate + H(+). In terms of biological role, GTP hydrolase that promotes the GTP-dependent binding of aminoacyl-tRNA to the A-site of ribosomes during protein biosynthesis. This is Elongation factor Tu 2 from Syntrophotalea carbinolica (strain DSM 2380 / NBRC 103641 / GraBd1) (Pelobacter carbinolicus).